The chain runs to 256 residues: Imidazole glycerol phosphate synthase subunit HisF (256 aa).

Active-site residues include Asp-12 and Asp-131.

The protein belongs to the HisA/HisF family. As to quaternary structure, heterodimer of HisH and HisF.

Its subcellular location is the cytoplasm. It catalyses the reaction 5-[(5-phospho-1-deoxy-D-ribulos-1-ylimino)methylamino]-1-(5-phospho-beta-D-ribosyl)imidazole-4-carboxamide + L-glutamine = D-erythro-1-(imidazol-4-yl)glycerol 3-phosphate + 5-amino-1-(5-phospho-beta-D-ribosyl)imidazole-4-carboxamide + L-glutamate + H(+). Its pathway is amino-acid biosynthesis; L-histidine biosynthesis; L-histidine from 5-phospho-alpha-D-ribose 1-diphosphate: step 5/9. Its function is as follows. IGPS catalyzes the conversion of PRFAR and glutamine to IGP, AICAR and glutamate. The HisF subunit catalyzes the cyclization activity that produces IGP and AICAR from PRFAR using the ammonia provided by the HisH subunit. The sequence is that of Imidazole glycerol phosphate synthase subunit HisF from Stutzerimonas stutzeri (strain A1501) (Pseudomonas stutzeri).